The sequence spans 114 residues: Transcription initiation factor IIA subunit 2 (114 aa).

It belongs to the TFIIA subunit 2 family. In terms of assembly, TFIIA is a heterodimer composed of the large toa1 and the small toa2 subunits.

The protein resides in the nucleus. In terms of biological role, TFIIA is a component of the transcription machinery of RNA polymerase II and plays an important role in transcriptional activation. TFIIA in a complex with tbp mediates transcriptional activity. The protein is Transcription initiation factor IIA subunit 2 (toa2) of Fusarium vanettenii (strain ATCC MYA-4622 / CBS 123669 / FGSC 9596 / NRRL 45880 / 77-13-4) (Fusarium solani subsp. pisi).